The following is a 191-amino-acid chain: MAP6 domain-containing protein 1 (191 aa).

Residues C5, C10, and C11 are each lipidated (S-palmitoyl cysteine). Residues 31-106 (HGYSDPGSEE…RGQSSAPPTR (76 aa)) are disordered. Phosphoserine occurs at positions 38 and 41. Mn stretches follow at residues 123–136 (TTSY…WTGV) and 158–170 (DPSP…VPEV). S160 is subject to Phosphoserine.

The protein belongs to the STOP family. As to quaternary structure, interacts with calmodulin. In terms of processing, palmitoylated. Palmitoylation enhances association with microtubules. Expressed in brain. Found in neurons in primary cultures, but absent in glial cells.

It is found in the golgi apparatus. The protein resides in the cytoplasm. It localises to the cytoskeleton. Its function is as follows. May have microtubule-stabilizing activity. The sequence is that of MAP6 domain-containing protein 1 (Map6d1) from Mus musculus (Mouse).